Consider the following 562-residue polypeptide: Apyrase (562 aa).

The signal sequence occupies residues 1 to 24 (MAGRPGYSEVIFLYVVSVAVIARA). Residues Asp47, His49, and Asp98 each contribute to the a divalent metal cation site. Asn112 carries N-linked (GlcNAc...) asparagine glycosylation. A divalent metal cation is bound by residues Asn130, His233, and His257. Residue Arg370 coordinates AMP. A glycan (N-linked (GlcNAc...) asparagine) is linked at Asn390. Residues Arg405, Phe424, and Asp514 each contribute to the AMP site.

This sequence belongs to the 5'-nucleotidase family. In terms of assembly, (Microbial infection) Interacts with Zika virus envelope protein E and Zika virus-like particles; the interaction does not affect Zika virus replication in human endothelial cells and keratinocytes. A divalent metal cation serves as cofactor. Post-translationally, the N-terminus is blocked. Female saliva (at protein level). Female salivary gland (at protein level). Not detected or low-level expression in female carcasses without salivary glands. Not detected in male tissues.

The protein localises to the secreted. It catalyses the reaction a ribonucleoside 5'-triphosphate + 2 H2O = a ribonucleoside 5'-phosphate + 2 phosphate + 2 H(+). In terms of biological role, facilitates hematophagy by preventing ADP-, collagen- and thrombin-dependent platelet aggregation in the host. Cleaves adenosine triphosphate (ATP) and adenosine diphosphate (ADP) to adenosine monophosphate (AMP) and inorganic phosphate. May reduce probing time by facilitating the speed of locating blood. Functionally, (Microbial infection) Does not affect Zika virus replication in human endothelial cells and keratinocytes. In Aedes aegypti (Yellowfever mosquito), this protein is Apyrase.